The following is a 173-amino-acid chain: ATP synthase subunit delta (173 aa).

The protein belongs to the ATPase delta chain family. F-type ATPases have 2 components, F(1) - the catalytic core - and F(0) - the membrane proton channel. F(1) has five subunits: alpha(3), beta(3), gamma(1), delta(1), epsilon(1). F(0) has three main subunits: a(1), b(2) and c(10-14). The alpha and beta chains form an alternating ring which encloses part of the gamma chain. F(1) is attached to F(0) by a central stalk formed by the gamma and epsilon chains, while a peripheral stalk is formed by the delta and b chains.

The protein resides in the cell inner membrane. Functionally, f(1)F(0) ATP synthase produces ATP from ADP in the presence of a proton or sodium gradient. F-type ATPases consist of two structural domains, F(1) containing the extramembraneous catalytic core and F(0) containing the membrane proton channel, linked together by a central stalk and a peripheral stalk. During catalysis, ATP synthesis in the catalytic domain of F(1) is coupled via a rotary mechanism of the central stalk subunits to proton translocation. Its function is as follows. This protein is part of the stalk that links CF(0) to CF(1). It either transmits conformational changes from CF(0) to CF(1) or is implicated in proton conduction. The sequence is that of ATP synthase subunit delta from Campylobacter lari (strain RM2100 / D67 / ATCC BAA-1060).